The primary structure comprises 270 residues: Undecaprenyl-diphosphatase 1 (270 aa).

The next 6 helical transmembrane spans lie at 79-99 (NLLL…LLFS), 105-125 (VLFN…IILW), 155-175 (LALI…LFLG), 182-202 (TEFS…YSLI), 215-235 (VFAV…RALL), and 242-262 (SFAV…GTWW).

Belongs to the UppP family.

It is found in the cell inner membrane. The enzyme catalyses di-trans,octa-cis-undecaprenyl diphosphate + H2O = di-trans,octa-cis-undecaprenyl phosphate + phosphate + H(+). In terms of biological role, catalyzes the dephosphorylation of undecaprenyl diphosphate (UPP). Confers resistance to bacitracin. This is Undecaprenyl-diphosphatase 1 from Chromobacterium violaceum (strain ATCC 12472 / DSM 30191 / JCM 1249 / CCUG 213 / NBRC 12614 / NCIMB 9131 / NCTC 9757 / MK).